A 121-amino-acid polypeptide reads, in one-letter code: Colipase-like protein 1 (121 aa).

Positions 1–23 (MMLPQWLLLLFLLFFFLFLLTRG) are cleaved as a signal peptide. 5 disulfide bridges follow: Cys-39–Cys-50, Cys-45–Cys-61, Cys-49–Cys-83, Cys-71–Cys-91, and Cys-85–Cys-107.

It belongs to the colipase family. As to expression, exclusively expressed in epididymis, in the corpus region.

The protein localises to the secreted. In Homo sapiens (Human), this protein is Colipase-like protein 1 (CLPSL1).